Reading from the N-terminus, the 106-residue chain is Large ribosomal subunit protein eL42 (106 aa).

It belongs to the eukaryotic ribosomal protein eL42 family.

The sequence is that of Large ribosomal subunit protein eL42 (RPL44) from Cyberlindnera jadinii (Torula yeast).